A 103-amino-acid polypeptide reads, in one-letter code: uncharacterized protein (103 aa).

Positions 12–88 (ADPAAFDEHY…AAADVANFAS (77 aa)) constitute an EthD domain.

This is an uncharacterized protein from Rhodococcus erythropolis (Arthrobacter picolinophilus).